Consider the following 331-residue polypeptide: N-arachidonyl glycine receptor (331 aa).

Residues 1–26 are Extracellular-facing; it reads MITLNNQDQPVPFNSSHPDEYKIAAL. Residue asparagine 14 is glycosylated (N-linked (GlcNAc...) asparagine). The chain crosses the membrane as a helical span at residues 27–47; the sequence is VFYSCIFIIGLFVNITALWVF. Residues 48–56 are Cytoplasmic-facing; the sequence is SCTTKKRTT. The helical transmembrane segment at 57-77 threads the bilayer; that stretch reads VTIYMMNVALVDLIFIMTLPF. Residues 78–95 lie on the Extracellular side of the membrane; the sequence is RMFYYAKDEWPFGEYFCQ. A disulfide bond links cysteine 94 and cysteine 172. Residues 96–116 traverse the membrane as a helical segment; the sequence is ILGALTVFYPSIALWLLAFIS. Topologically, residues 117–138 are cytoplasmic; it reads ADRYMAIVQPKYAKELKNTCKA. A helical membrane pass occupies residues 139–159; it reads VLACVGVWIMTLTTTTPLLLL. At 160–191 the chain is on the extracellular side; sequence YKDPDKDSTPATCLKISDIIYLKAVNVLNLTR. A helical membrane pass occupies residues 192–212; sequence LTFFFLIPLFIMIGCYLVIIH. Residues 213–232 are Cytoplasmic-facing; sequence NLLHGRTSKLKPKVKEKSIR. A helical membrane pass occupies residues 233 to 253; that stretch reads IIITLLVQVLVCFMPFHICFA. At 254 to 268 the chain is on the extracellular side; sequence FLMLGTGENSYNPWG. A helical transmembrane segment spans residues 269–289; that stretch reads AFTTFLMNLSTCLDVILYYIV. The Cytoplasmic segment spans residues 290–331; that stretch reads SKQFQARVISVMLYRNYLRSMRRKSFRSGSLRSLSNINSEML. Serine 322 carries the phosphoserine modification.

It belongs to the G-protein coupled receptor 1 family. In terms of tissue distribution, expressed in midpiece of spermatozoon (at protein level). Most abundant in testis and spleen. Highly expressed in CD4 and CD8-positive T-cells as well as CD19-positive B-cells.

The protein localises to the cell membrane. It is found in the cytoplasmic vesicle membrane. Functionally, g protein-coupled receptor (GPCR) that plays a role in diverse physiological processes particularly within the immune and nervous systems. Becomes active when triggered by various endogenous ligands including endocannabinoid N-arachidonyl glycine (NAGly), delta-9-tetrahydrocannabinol or resolvin D2/RvD2 derived from the omega-3 fatty acid docosahexaenoic acid (DHA). Upon RvD2 binding, facilitates the resolution of inflammation, aiding in tissue repair and homeostasis. Mechanistically, RvD2 ligation initiates Galphas protein coupling, activation of cAMP-PKA signaling pathway and phosphorylation of STAT3, leading to RvD2-stimulated macrophage phagocytosis. Mediates NAGly-induced process of reorganization of actin filaments and induction of acrosomal exocytosis. Activation by N-arachidonoyl glycine (NAGly) can also induce apoptosis in macrophages. Plays a role in homeostasis of CD8+ subsets of intraepithelial lymphocytes (IELs) (CD8alphaalpha and CD8alphabeta IELs) in small intestine by supporting preferential migration of CD8alphaalpha T-cells to intraepithelial compartment over lamina propria compartment, and by mediating their reconstitution into small intestine after bone marrow transplant. Also participates in hypotensive responses, mediating reduction in intraocular and blood pressure. This Homo sapiens (Human) protein is N-arachidonyl glycine receptor (GPR18).